Here is a 105-residue protein sequence, read N- to C-terminus: U7-hexatoxin-Hi1a (105 aa).

Residues 1-23 (MKTILLFLGVCAVGASMMTGGWT) form the signal peptide.

This sequence belongs to the cystatin family. Post-translationally, contains 2 disulfide bonds. Expressed by the venom gland.

The protein resides in the secreted. Its function is as follows. Inhibits various C1 cysteine proteases. This protein has no toxic activity and its function in the venom is unknown. It may play a role as a housekeeping or regulatory protein. This is U7-hexatoxin-Hi1a from Hadronyche infensa (Fraser island funnel-web spider).